The primary structure comprises 505 residues: Lysine--tRNA ligase, heat inducible (505 aa).

An N6-acetyllysine mark is found at Lys-114 and Lys-156. The Mg(2+) site is built by Glu-415 and Glu-422.

The protein belongs to the class-II aminoacyl-tRNA synthetase family. Homodimer. The cofactor is Mg(2+).

It localises to the cytoplasm. It catalyses the reaction tRNA(Lys) + L-lysine + ATP = L-lysyl-tRNA(Lys) + AMP + diphosphate. In Escherichia coli O6:H1 (strain CFT073 / ATCC 700928 / UPEC), this protein is Lysine--tRNA ligase, heat inducible (lysU).